The following is a 416-amino-acid chain: UDP-N-acetylglucosamine 1-carboxyvinyltransferase (416 aa).

22 to 23 (KN) is a binding site for phosphoenolpyruvate. Residue Arg92 coordinates UDP-N-acetyl-alpha-D-glucosamine. Cys116 serves as the catalytic Proton donor. Residue Cys116 is modified to 2-(S-cysteinyl)pyruvic acid O-phosphothioketal. Residues 121 to 125 (RPVDQ), Asp304, and Ile326 each bind UDP-N-acetyl-alpha-D-glucosamine.

Belongs to the EPSP synthase family. MurA subfamily.

It is found in the cytoplasm. It carries out the reaction phosphoenolpyruvate + UDP-N-acetyl-alpha-D-glucosamine = UDP-N-acetyl-3-O-(1-carboxyvinyl)-alpha-D-glucosamine + phosphate. It functions in the pathway cell wall biogenesis; peptidoglycan biosynthesis. Cell wall formation. Adds enolpyruvyl to UDP-N-acetylglucosamine. The sequence is that of UDP-N-acetylglucosamine 1-carboxyvinyltransferase from Janthinobacterium sp. (strain Marseille) (Minibacterium massiliensis).